A 1076-amino-acid chain; its full sequence is Hormone-sensitive lipase (1076 aa).

Composition is skewed to polar residues over residues Met-1–Asp-12 and Glu-38–Pro-64. Disordered stretches follow at residues Met-1–Gln-198 and Val-229–Met-250. Basic and acidic residues predominate over residues Ala-65–Ala-77. The segment covering Ala-94–Gly-116 has biased composition (polar residues). Positions Gly-140–Ala-149 are enriched in pro residues. Over residues Gln-150–Ala-161 the composition is skewed to low complexity. Residues Pro-172 to Gln-198 show a composition bias toward polar residues. Residues Asp-237–Ser-246 are compositionally biased toward low complexity. Positions His-651–Gly-653 match the Involved in the stabilization of the negatively charged intermediate by the formation of the oxyanion hole motif. Ser-725 is an active-site residue. Residues Lys-838–Pro-930 form a disordered region. Ser-853 is subject to Phosphoserine. Phosphoserine; by AMPK is present on Ser-855. The segment covering Arg-882–Asp-908 has biased composition (polar residues). A phosphoserine mark is found at Ser-897, Ser-929, Ser-950, and Ser-951. Active-site residues include Asp-994 and His-1024. Positions Ala-1055 to His-1076 are disordered. A compositionally biased stretch (gly residues) spans Gly-1067–His-1076.

This sequence belongs to the 'GDXG' lipolytic enzyme family. As to quaternary structure, monomer and homodimer. Interacts with CAVIN1 in the adipocyte cytoplasm. Interacts with PLIN5. Phosphorylation by AMPK reduces its translocation towards the lipid droplets. In terms of tissue distribution, testis.

The protein localises to the cell membrane. It localises to the membrane. Its subcellular location is the caveola. It is found in the cytoplasm. The protein resides in the cytosol. The protein localises to the lipid droplet. It carries out the reaction a diacylglycerol + H2O = a monoacylglycerol + a fatty acid + H(+). The enzyme catalyses a triacylglycerol + H2O = a diacylglycerol + a fatty acid + H(+). The catalysed reaction is a monoacylglycerol + H2O = glycerol + a fatty acid + H(+). It catalyses the reaction Hydrolyzes glycerol monoesters of long-chain fatty acids.. It carries out the reaction 1,2-di-(9Z-octadecenoyl)-glycerol + (9Z)-octadecenoate + H(+) = 1,2,3-tri-(9Z-octadecenoyl)-glycerol + H2O. The enzyme catalyses 2,3-di-(9Z)-octadecenoyl-sn-glycerol + H2O = 2-(9Z-octadecenoyl)-glycerol + (9Z)-octadecenoate + H(+). The catalysed reaction is cholesteryl (9Z-octadecenoate) + H2O = cholesterol + (9Z)-octadecenoate + H(+). It catalyses the reaction 1,2,3-tri-(9Z-octadecenoyl)-glycerol + H2O = di-(9Z)-octadecenoylglycerol + (9Z)-octadecenoate + H(+). It carries out the reaction all-trans-retinyl hexadecanoate + H2O = all-trans-retinol + hexadecanoate + H(+). The enzyme catalyses 1,2-di-(9Z-octadecenoyl)-glycerol + H2O = (9Z-octadecenoyl)-glycerol + (9Z)-octadecenoate + H(+). The catalysed reaction is 2-(5Z,8Z,11Z,14Z-eicosatetraenoyl)-glycerol + H2O = glycerol + (5Z,8Z,11Z,14Z)-eicosatetraenoate + H(+). It catalyses the reaction 1-(9Z-octadecenoyl)-glycerol + H2O = glycerol + (9Z)-octadecenoate + H(+). It carries out the reaction 2-(9Z-octadecenoyl)-glycerol + H2O = glycerol + (9Z)-octadecenoate + H(+). The enzyme catalyses 1-O-hexadecyl-2-acetyl-sn-glycerol + H2O = 1-O-hexadecyl-sn-glycerol + acetate + H(+). The catalysed reaction is 1,2-di-(9Z-octadecenoyl)-sn-glycerol + H2O = (9Z-octadecenoyl)-glycerol + (9Z)-octadecenoate + H(+). It catalyses the reaction 1,3-di-(9Z-octadecenoyl)-glycerol + H2O = 1-(9Z-octadecenoyl)-glycerol + (9Z)-octadecenoate + H(+). It carries out the reaction 1,2-di-(9Z-octadecenoyl)-glycerol + H2O = 2-(9Z-octadecenoyl)-glycerol + (9Z)-octadecenoate + H(+). It participates in glycerolipid metabolism; triacylglycerol degradation. With respect to regulation, retinyl ester hydrolase is inhibited by bis-p-nitrophenyl phosphate. Lipase with broad substrate specificity, catalyzing the hydrolysis of triacylglycerols (TAGs), diacylglycerols (DAGs), monoacylglycerols (MAGs), cholesteryl esters and retinyl esters. Shows a preferential hydrolysis of DAGs over TAGs and MAGs and preferentially hydrolyzes the fatty acid (FA) esters at the sn-3 position of the glycerol backbone in DAGs. Preferentially hydrolyzes FA esters at the sn-1 and sn-2 positions of the glycerol backbone in TAGs. Catalyzes the hydrolysis of 2-arachidonoylglycerol, an endocannabinoid and of 2-acetyl monoalkylglycerol ether, the penultimate precursor of the pathway for de novo synthesis of platelet-activating factor. In adipose tissue and heart, it primarily hydrolyzes stored triglycerides to free fatty acids, while in steroidogenic tissues, it principally converts cholesteryl esters to free cholesterol for steroid hormone production. This is Hormone-sensitive lipase (LIPE) from Homo sapiens (Human).